We begin with the raw amino-acid sequence, 352 residues long: Peptide chain release factor 1 (352 aa).

At Gln-233 the chain carries N5-methylglutamine. The disordered stretch occupies residues 288–309; it reads NAKDRKEQVGSGDRSERIRTYN. Over residues 289–306 the composition is skewed to basic and acidic residues; it reads AKDRKEQVGSGDRSERIR.

This sequence belongs to the prokaryotic/mitochondrial release factor family. In terms of processing, methylated by PrmC. Methylation increases the termination efficiency of RF1.

Its subcellular location is the cytoplasm. Its function is as follows. Peptide chain release factor 1 directs the termination of translation in response to the peptide chain termination codons UAG and UAA. This chain is Peptide chain release factor 1, found in Helicobacter pylori (strain G27).